Here is a 227-residue protein sequence, read N- to C-terminus: Chaperone protein FocC (227 aa).

The signal sequence occupies residues 1–21 (MRIWAVLASFLVFFYIPQSYA).

Belongs to the periplasmic pilus chaperone family.

The protein localises to the periplasm. Functionally, involved in the biogenesis of the F1C fimbriae. This chain is Chaperone protein FocC (focC), found in Escherichia coli O6:H1 (strain CFT073 / ATCC 700928 / UPEC).